Here is a 455-residue protein sequence, read N- to C-terminus: J protein JJJ2 (455 aa).

The J domain maps to 12 to 76; sequence TYYSILGVPT…QLRAEYDKKL (65 aa). Positions 104 to 241 are disordered; the sequence is RNSKPYEQQP…RKKSEKKATP (138 aa). Residues 133 to 144 are compositionally biased toward low complexity; the sequence is NSNPHNENSSNN. The segment covering 156-168 has biased composition (basic and acidic residues); sequence TLSKDSEDKHGTD.

The protein localises to the cytoplasm. It is found in the nucleus. This Candida glabrata (strain ATCC 2001 / BCRC 20586 / JCM 3761 / NBRC 0622 / NRRL Y-65 / CBS 138) (Yeast) protein is J protein JJJ2 (JJJ2).